We begin with the raw amino-acid sequence, 198 residues long: Sporulation-specific protein 16 (198 aa).

In terms of biological role, necessary for efficient spore formation. In Saccharomyces cerevisiae (strain ATCC 204508 / S288c) (Baker's yeast), this protein is Sporulation-specific protein 16 (SPO16).